The following is a 476-amino-acid chain: Cysteine--tRNA ligase (476 aa).

Cysteine 36 lines the Zn(2+) pocket. The 'HIGH' region motif lies at 38-48 (PTVYDYAHIGN). Positions 221, 246, and 250 each coordinate Zn(2+). The 'KMSKS' region signature appears at 278–282 (KMSKS). Lysine 281 contributes to the ATP binding site.

The protein belongs to the class-I aminoacyl-tRNA synthetase family. In terms of assembly, monomer. The cofactor is Zn(2+).

Its subcellular location is the cytoplasm. The enzyme catalyses tRNA(Cys) + L-cysteine + ATP = L-cysteinyl-tRNA(Cys) + AMP + diphosphate. The polypeptide is Cysteine--tRNA ligase (Chlamydia abortus (strain DSM 27085 / S26/3) (Chlamydophila abortus)).